Reading from the N-terminus, the 1337-residue chain is ATP-dependent helicase/nuclease subunit A (1337 aa).

One can recognise a UvrD-like helicase ATP-binding domain in the interval F3 to R484. A24 to T31 serves as a coordination point for ATP. One can recognise a UvrD-like helicase C-terminal domain in the interval A522–G867.

The protein belongs to the helicase family. AddA subfamily. As to quaternary structure, heterodimer of AddA and AddB/RexB. Mg(2+) serves as cofactor.

It carries out the reaction Couples ATP hydrolysis with the unwinding of duplex DNA by translocating in the 3'-5' direction.. The catalysed reaction is ATP + H2O = ADP + phosphate + H(+). In terms of biological role, the heterodimer acts as both an ATP-dependent DNA helicase and an ATP-dependent, dual-direction single-stranded exonuclease. Recognizes the chi site generating a DNA molecule suitable for the initiation of homologous recombination. The AddA nuclease domain is required for chi fragment generation; this subunit has the helicase and 3' -&gt; 5' nuclease activities. The chain is ATP-dependent helicase/nuclease subunit A from Limosilactobacillus fermentum (strain NBRC 3956 / LMG 18251) (Lactobacillus fermentum).